Reading from the N-terminus, the 1744-residue chain is Tanabin (1744 aa).

The head stretch occupies residues 1–12; the sequence is MEGYLASVSLGE. The interval 8 to 48 is coil 1A; sequence VSLGEESTQMWSLNKRLEAYLSRVKALEEENELLRKEIHSL. An IF rod domain is found at 13–320; that stretch reads ESTQMWSLNK…SLLEAESTRI (308 aa). Positions 49–60 are linker 1; the sequence is RSSKSERCWKKK. The coil 1B stretch occupies residues 61 to 156; that stretch reads HHEEMMKLRD…RDHEEEKALM (96 aa). A linker 12 region spans residues 157 to 179; it reads EEEIASFSQRLENFRVAPVAFKP. Residues 180-193 form a coil 2A region; sequence VEVDDYARKLSEIW. Residues 194 to 199 form a linker 2 region; that stretch reads QGAVEE. The interval 200-314 is coil 2B; that stretch reads YKSEVSVLEA…EVATYRSLLE (115 aa). The tract at residues 315–1744 is tail; it reads AESTRIYTDY…KKALRWKRMF (1430 aa). Composition is skewed to basic and acidic residues over residues 341–371 and 785–815; these read RRRQSEDTRKTVSKDHRQSYSKKQIGDKNEL and HSHHEETKTSESIAVEHNRMESEHAEVDKSS. Disordered regions lie at residues 341–372, 785–816, 976–996, 1032–1093, 1340–1470, 1485–1506, and 1560–1722; these read RRRQSEDTRKTVSKDHRQSYSKKQIGDKNELQ, HSHHEETKTSESIAVEHNRMESEHAEVDKSSE, EENQLSENEGNQNFGGNDIEE, SMED…QQED, DSDL…FGDV, SGLAQEPSYLGDNEESEDSMEN, and AREK…LNGH. A compositionally biased stretch (polar residues) spans 980 to 990; that stretch reads LSENEGNQNFG. Acidic residues predominate over residues 1034-1056; sequence EDEEEQNNPETEDNIGLEQESDQ. Residues 1074-1086 show a composition bias toward basic and acidic residues; that stretch reads VVFKPEDMSDKSE. Residues 1340–1351 are compositionally biased toward acidic residues; the sequence is DSDLESTEEQVQ. Positions 1352 to 1367 are enriched in basic and acidic residues; that stretch reads ETERIPFKPEDSKMEN. Over residues 1368-1377 the composition is skewed to acidic residues; it reads ENSESEESVD. The span at 1386-1398 shows a compositional bias: basic and acidic residues; sequence HKSEEFEISKDYQ. Residues 1412-1421 show a composition bias toward acidic residues; it reads LEDEFEDLTE. The segment covering 1423 to 1432 has biased composition (basic and acidic residues); the sequence is PDVHEEHQNN. Over residues 1433-1442 the composition is skewed to polar residues; sequence DDSGASTFIT. Positions 1445–1460 are enriched in basic and acidic residues; sequence DEDKEREVRESVSKDE. The segment covering 1496–1505 has biased composition (acidic residues); that stretch reads DNEESEDSME. 3 stretches are compositionally biased toward polar residues: residues 1576–1586, 1597–1621, and 1629–1639; these read EFTNENQSASP, EDSVISDNEGTTSSYEDLPNATSIS, and SNISTTEQSST. The segment covering 1680 to 1691 has biased composition (acidic residues); the sequence is RSEDEELDDEGS. Residues 1698–1709 show a composition bias toward basic and acidic residues; it reads NDEKANGEHKDV.

Belongs to the intermediate filament family. As to expression, growth cones of embryonic vertebrate neurons.

The protein is Tanabin of Xenopus laevis (African clawed frog).